The chain runs to 796 residues: Putative aconitate hydratase, mitochondrial (796 aa).

Residues 1-28 constitute a mitochondrion transit peptide; the sequence is MLRQIVSQRSAARRQLIDQLAPCLRRGL. Substrate contacts are provided by residues Gln108 and 201–203; that span reads DSH. Positions 399, 462, and 465 each coordinate [4Fe-4S] cluster. Substrate contacts are provided by Arg489 and Arg494. The interval 540-569 is disordered; it reads EPPTGQDLPSKGFEAGNPAFQPSAPVPDSS. A substrate-binding site is contributed by 685–686; that stretch reads AR.

Belongs to the aconitase/IPM isomerase family.

The protein resides in the mitochondrion. Functionally, has no detectable activity towards cis-acontiate or cis-homoaconitate. The chain is Putative aconitate hydratase, mitochondrial (acoB) from Emericella nidulans (strain FGSC A4 / ATCC 38163 / CBS 112.46 / NRRL 194 / M139) (Aspergillus nidulans).